The sequence spans 689 residues: Glycine--tRNA ligase beta subunit (689 aa).

Belongs to the class-II aminoacyl-tRNA synthetase family. In terms of assembly, tetramer of two alpha and two beta subunits.

Its subcellular location is the cytoplasm. The catalysed reaction is tRNA(Gly) + glycine + ATP = glycyl-tRNA(Gly) + AMP + diphosphate. The polypeptide is Glycine--tRNA ligase beta subunit (Enterobacter sp. (strain 638)).